The chain runs to 717 residues: Homeobox protein araucan (717 aa).

7 disordered regions span residues 46–80 (APAMSPTGGQDCQGSQPSGGAGGDASSGALSPNAL), 94–130 (GGSSAGGGGPADLATGGSLDGNGVGTTPTAGGAGGGG), 317–371 (NKMT…AIDE), 395–418 (SGGYPGGGGSSSGHPGGYHPYHHQ), 478–516 (TPPPAYMGHQSMPLQQQQQQQQQQQQAQHQYPPSEAGRD), 549–615 (TNNS…ASQR), and 675–717 (ARLG…KFTN). Positions 94–103 (GGSSAGGGGP) are enriched in gly residues. The homeobox; TALE-type DNA-binding region spans 255–317 (LAARRKNATR…NARRRLKKEN (63 aa)). Over residues 317–327 (NKMTWEPKNRT) the composition is skewed to basic and acidic residues. S336 carries the post-translational modification Phosphoserine. Residues 337-347 (DDEKDKEDLEP) are compositionally biased toward basic and acidic residues. Positions 395–410 (SGGYPGGGGSSSGHPG) are enriched in gly residues. Low complexity-rich tracts occupy residues 492-507 (QQQQQQQQQQQQAQHQ), 559-589 (PPQQQQPQQQQQQLQQGGTIHTTGSSSGPII), 599-614 (QQQQQLQQQSQSTASQ), and 687-698 (SSGNSSSSSSSS).

This sequence belongs to the TALE/IRO homeobox family.

The protein resides in the nucleus. Functionally, controls proneural and vein forming genes. Positive transcriptional controller of AC-SC (achaete-scute). May act as an activator that interacts with the transcriptional complex assembled on the AC and SC promoters and participates in transcription initiation. This is Homeobox protein araucan (ara) from Drosophila melanogaster (Fruit fly).